The primary structure comprises 397 residues: Chorismate synthase (397 aa).

NADP(+) is bound by residues Arg-40 and Arg-46. FMN contacts are provided by residues 129 to 131, 257 to 258, Gly-302, 317 to 321, and Arg-343; these read RSS, QA, and KPISS.

It belongs to the chorismate synthase family. Homotetramer. FMNH2 is required as a cofactor.

The enzyme catalyses 5-O-(1-carboxyvinyl)-3-phosphoshikimate = chorismate + phosphate. It functions in the pathway metabolic intermediate biosynthesis; chorismate biosynthesis; chorismate from D-erythrose 4-phosphate and phosphoenolpyruvate: step 7/7. In terms of biological role, catalyzes the anti-1,4-elimination of the C-3 phosphate and the C-6 proR hydrogen from 5-enolpyruvylshikimate-3-phosphate (EPSP) to yield chorismate, which is the branch point compound that serves as the starting substrate for the three terminal pathways of aromatic amino acid biosynthesis. This reaction introduces a second double bond into the aromatic ring system. This Chlorobium phaeovibrioides (strain DSM 265 / 1930) (Prosthecochloris vibrioformis (strain DSM 265)) protein is Chorismate synthase.